The sequence spans 151 residues: Ribosome maturation factor RimP (151 aa).

This sequence belongs to the RimP family.

Its subcellular location is the cytoplasm. Functionally, required for maturation of 30S ribosomal subunits. This chain is Ribosome maturation factor RimP, found in Pasteurella multocida (strain Pm70).